We begin with the raw amino-acid sequence, 394 residues long: MATVDRWLLPDGIEEVLPPEAARIEAARRQVLDLFHRWGYEFVVTPHIEYLESLLTGAGQDLDLRTFKVTDPASGRLMGFRADITPQVARMDAHSLRREGPSRLCYAGSVLHAQPRALSTSRSPIQLGAELYGDPSPASDVEVISLMLEMLEMAEVPDVHMDLGHVGIYRGLARAAGLSGEVEQQLFDALQRKAVDEVEALTADLPAELRGMLRALAELCGGRDALEQGRARLAAAPADVQVALNELIEIADSLAGRFPGLPLYFDLGELRGYHYHTGVVFAAFVPGVGQSIAQGGRYDDIGADFGRARPATGFSTDLKSLVTLGQARLDQAVSGIWAPAEGAGLWQAVQRLRRDGQRVVQALPGQDAASAREAGCDRQLALRDGNWQVAPLAS.

This sequence belongs to the class-II aminoacyl-tRNA synthetase family. HisZ subfamily. In terms of assembly, heteromultimer composed of HisG and HisZ subunits.

The protein resides in the cytoplasm. It participates in amino-acid biosynthesis; L-histidine biosynthesis; L-histidine from 5-phospho-alpha-D-ribose 1-diphosphate: step 1/9. Required for the first step of histidine biosynthesis. May allow the feedback regulation of ATP phosphoribosyltransferase activity by histidine. This Pseudomonas aeruginosa (strain LESB58) protein is ATP phosphoribosyltransferase regulatory subunit.